The sequence spans 275 residues: 2'-N-acetylparomamine deacetylase (275 aa).

Positions 14, 17, and 166 each coordinate Zn(2+).

It belongs to the PIGL family. Zn(2+) is required as a cofactor.

The catalysed reaction is 2'-N-acetylparomamine + H2O = paromamine + acetate. Its pathway is antibiotic biosynthesis; butirosin biosynthesis. Functionally, deacetylase involved in the biosynthesis of butirosin by mediating deacetylation of 2'-N-acetylparomamine. In Niallia circulans (Bacillus circulans), this protein is 2'-N-acetylparomamine deacetylase (btrD).